The following is a 123-amino-acid chain: U11/U12 small nuclear ribonucleoprotein 25 kDa protein (123 aa).

In terms of domain architecture, Ubiquitin-like spans 32-123 (MTVRVCKMDG…VSFIKKLRQK (92 aa)).

In terms of assembly, component of the U11/U12 snRNPs that are part of the U12-type spliceosome.

The protein localises to the nucleus. This is U11/U12 small nuclear ribonucleoprotein 25 kDa protein (SNRNP25) from Bos taurus (Bovine).